We begin with the raw amino-acid sequence, 423 residues long: 26S proteasome regulatory subunit 6A homolog (423 aa).

ATP is bound at residue 211–218 (GPPGTGKT).

It belongs to the AAA ATPase family.

Its subcellular location is the cytoplasm. The protein resides in the nucleus. The 26S proteasome is involved in the ATP-dependent degradation of ubiquitinated proteins. The regulatory (or ATPase) complex confers ATP dependency and substrate specificity to the 26S complex. This Solanum lycopersicum (Tomato) protein is 26S proteasome regulatory subunit 6A homolog (TBP1).